Here is a 423-residue protein sequence, read N- to C-terminus: 26S proteasome regulatory subunit 6A-A (423 aa).

Residue 211–218 (GPPGTGKT) coordinates ATP.

Belongs to the AAA ATPase family. In terms of assembly, may form a heterodimer with a related family member.

The protein localises to the cytoplasm. The protein resides in the nucleus. Functionally, the 26S proteasome is involved in the ATP-dependent degradation of ubiquitinated proteins. The regulatory (or ATPase) complex confers ATP dependency and substrate specificity to the 26S complex. This is 26S proteasome regulatory subunit 6A-A from Xenopus laevis (African clawed frog).